Consider the following 571-residue polypeptide: Potassium-transporting ATPase potassium-binding subunit (571 aa).

11 helical membrane passes run 5–25, 64–84, 136–156, 178–198, 254–274, 285–305, 330–350, 357–379, 421–441, 488–508, and 527–547; these read GWTQ…PLGW, LGYA…LYAI, GLTH…VALI, ILYV…WQGI, LSNF…TNVF, WAIL…AYWA, FDIA…CGAV, FTAL…IGGV, MLGI…ATVL, LAVG…AIAG, and GALF…LTFF.

This sequence belongs to the KdpA family. In terms of assembly, the system is composed of three essential subunits: KdpA, KdpB and KdpC.

It localises to the cell inner membrane. Its function is as follows. Part of the high-affinity ATP-driven potassium transport (or Kdp) system, which catalyzes the hydrolysis of ATP coupled with the electrogenic transport of potassium into the cytoplasm. This subunit binds the periplasmic potassium ions and delivers the ions to the membrane domain of KdpB through an intramembrane tunnel. The protein is Potassium-transporting ATPase potassium-binding subunit of Methylobacterium nodulans (strain LMG 21967 / CNCM I-2342 / ORS 2060).